A 79-amino-acid chain; its full sequence is Dicentracin (79 aa).

An N-terminal signal peptide occupies residues 1–22; the sequence is MKCATLFLVLSMVVLMAEPGDA. The residue at position 44 (glycine 44) is a Glycine amide. Residues 47 to 79 constitute a propeptide that is removed on maturation; sequence AQQDQQDQQYQQDQQDQQAEQYQRFNRERAAFD. Positions 48–67 are disordered; it reads QQDQQDQQYQQDQQDQQAEQ.

This sequence belongs to the pleurocidin family.

The protein resides in the secreted. In Dicentrarchus labrax (European seabass), this protein is Dicentracin.